The following is a 108-amino-acid chain: Circadian clock oscillator protein KaiB (108 aa).

The protein belongs to the KaiB family. As to quaternary structure, undergoes a major conformational rearrangment; in the free state forms homotetramers with 2 dimers. When bound to the CI domain of KaiC, KaiA or CikA switches to a monomeric thioredoxin-fold (KaiB(fs)). The KaiABC complex composition changes during the circadian cycle to control KaiC phosphorylation. Complexes KaiC(6), KaiA(2-4):KaiC(6), KaiB(6):KaiC(6) and KaiC(6):KaiB(6):KaiA(12) are among the most important forms, many form cooperatively. Binds to KaiA; 1 KaiB(fs) binds to the KaiA homodimer. Binds to the B-loop in the CI domain of KaiC; SasA and KaiB compete to bind to the CI domain. Binding to KaiC CI domain occurs 1:1. KaiA and CikA bind to the same region of KaiB(fs) and therefore compete.

Functionally, key component of the KaiABC oscillator complex, which constitutes the main circadian regulator in cyanobacteria. Its composition changes during the circadian cycle to control KaiC phosphorylation. KaiA stimulates KaiC autophosphorylation, while KaiB sequesters KaiA, leading to KaiC autodephosphorylation. KaiA binding to KaiC yields KaiA(2-4):KaiC(6) complexes which stimulate KaiC autophosphorylation. Phospho-Ser-431 KaiC accumulation triggers binding of KaiB to form the KaiB(6):KaiC(6) complex, leading to changes in the output regulators CikA and SasA. KaiB switches to a thioredoxin-like fold (KaiB(fs)) in complex with KaiC. KaiB(6):KaiC(6) formation exposes a site for KaiA binding that sequesters KaiA from the CII domain, making the KaiC(6):KaiB(6):KaiA(12) complex that results in KaiC autodephosphorylation. Complete dephosphorylation of KaiC leads to dissociation of KaiA(2):KaiB(1), completing 1 cycle of the Kai oscillator. Its function is as follows. A metamorphic protein which reversibly switches between an inactive tetrameric fold and a rare, thioredoxin-like monomeric fold (KaiB(fs)). KaiB(fs) binds phospho-KaiC, KaiA and CikA. KaiA and CikA compete for binding to KaiB(fs), and KaiB(fs) and SasA compete for binding to KaiC, thus the clock oscillator and output signal pathway are tightly coupled. This is Circadian clock oscillator protein KaiB from Thermosynechococcus vestitus (strain NIES-2133 / IAM M-273 / BP-1).